A 351-amino-acid polypeptide reads, in one-letter code: Peptide chain release factor 1 (351 aa).

At Gln230 the chain carries N5-methylglutamine.

It belongs to the prokaryotic/mitochondrial release factor family. Post-translationally, methylated by PrmC. Methylation increases the termination efficiency of RF1.

It localises to the cytoplasm. Peptide chain release factor 1 directs the termination of translation in response to the peptide chain termination codons UAG and UAA. The chain is Peptide chain release factor 1 from Onion yellows phytoplasma (strain OY-M).